A 311-amino-acid polypeptide reads, in one-letter code: MAGPLWRAAVFIQRHRTSLLVGSCVGLFGVQISFHLFPDPIVQWLYQYWPQGQPAPLSPQLRSLFQEVLKDIGVPSGHCYKPFTAFTFQPVSAGFPQLPAGAVVGIPAIFLGGLVTNIDHTVVIHGQKVDWQSPAGTRLRDALTLSHDAQKFALAKEVVYLESGMAALQTLPAPVCLAGTWAISVGAKHALGLYGGPMSLRAAFNLVAIVVGYVAYAFSKDSLTVALEGWLDHRTASLSAAYVRGGVEFYEKILSGNLALRSLLGRQGEKLYTPSGNIVPRHWFRINHLPYTTRRDSLLQMWRAKVSPGHF.

The Mitochondrial matrix segment spans residues 1 to 17; that stretch reads MAGPLWRAAVFIQRHRT. A helical membrane pass occupies residues 18–38; it reads SLLVGSCVGLFGVQISFHLFP. Topologically, residues 39-164 are mitochondrial intermembrane; sequence DPIVQWLYQY…AKEVVYLESG (126 aa). A helical transmembrane segment spans residues 165 to 185; it reads MAALQTLPAPVCLAGTWAISV. Over 186–197 the chain is Mitochondrial matrix; the sequence is GAKHALGLYGGP. A helical transmembrane segment spans residues 198 to 218; the sequence is MSLRAAFNLVAIVVGYVAYAF. Over 219-311 the chain is Mitochondrial intermembrane; it reads SKDSLTVALE…WRAKVSPGHF (93 aa).

The protein belongs to the TMEM177 family. Found in a complex with COX20, COA6, MT-CO2/COX2, COX18, SCO1 and SCO2. Interacts with COX20. Interacts with COX1, MT-CO2/COX2, SCO1 and SCO2 in a COX20-dependent manner.

It is found in the mitochondrion inner membrane. In terms of biological role, plays a role in the early steps of cytochrome c oxidase subunit II (MT-CO2/COX2) maturation and is required for the stabilization of COX20 and the newly synthesized MT-CO2/COX2 protein. This chain is Transmembrane protein 177 (Tmem177), found in Rattus norvegicus (Rat).